Consider the following 539-residue polypeptide: Probable malate:quinone oxidoreductase (539 aa).

This sequence belongs to the MQO family. FAD serves as cofactor.

It catalyses the reaction (S)-malate + a quinone = a quinol + oxaloacetate. It participates in carbohydrate metabolism; tricarboxylic acid cycle; oxaloacetate from (S)-malate (quinone route): step 1/1. The chain is Probable malate:quinone oxidoreductase from Sodalis glossinidius (strain morsitans).